The following is a 243-amino-acid chain: Homeobox protein goosecoid isoform B (243 aa).

Residues 148–207 constitute a DNA-binding region (homeobox); sequence KRRHRTIFTDEQLEALENLFQETKYPDVGTREQLARRVHLREEKVEVWFKNRRAKWRRQK. The interval 201-243 is disordered; that stretch reads AKWRRQKRSSSEESENAQKWNKSSKNSAEKRDEQAKSDLDSDS. A compositionally biased stretch (polar residues) spans 217-226; that stretch reads AQKWNKSSKN. Over residues 227–243 the composition is skewed to basic and acidic residues; the sequence is SAEKRDEQAKSDLDSDS.

This sequence belongs to the paired homeobox family. Bicoid subfamily.

It is found in the nucleus. Plays a central role in executing Spemann's organizer phenomenon (the dorsal blastopore lip of the early Xenopus laevis gastrula can organize a complete secondary body axis when transplanted to another embryo). This is Homeobox protein goosecoid isoform B (gsc-b) from Xenopus laevis (African clawed frog).